A 176-amino-acid chain; its full sequence is Zinc finger protein 428 (176 aa).

A disordered region spans residues 1-152; it reads MTETREPTET…EEEGGTYHCT (152 aa). The segment covering 16-46 has biased composition (acidic residues); sequence LEEDDEDLSPEPDSEEEEEEEEEETTDDPEY. Phosphothreonine is present on T96. The segment covering 126-138 has biased composition (basic and acidic residues); the sequence is PSRTGETRPAGRD. A C2H2-type zinc finger spans residues 149-171; that stretch reads YHCTECEDSFDNLGELHGHFMLH.

In Mus musculus (Mouse), this protein is Zinc finger protein 428 (Znf428).